Reading from the N-terminus, the 242-residue chain is Succinyl-CoA:3-ketoacid coenzyme A transferase subunit A (242 aa).

33–39 (GGFGLCG) provides a ligand contact to CoA.

It belongs to the 3-oxoacid CoA-transferase subunit A family. Heterodimer of a subunit A and a subunit B.

The catalysed reaction is a 3-oxo acid + succinyl-CoA = a 3-oxoacyl-CoA + succinate. It participates in bacterial outer membrane biogenesis; lipopolysaccharide biosynthesis. The sequence is that of Succinyl-CoA:3-ketoacid coenzyme A transferase subunit A (lpsI) from Xanthomonas campestris pv. campestris (strain ATCC 33913 / DSM 3586 / NCPPB 528 / LMG 568 / P 25).